Reading from the N-terminus, the 142-residue chain is MRHGNGYRKLNRTASHRKAMFANMAASLIEHEQIVTTLPKAKEIRPIVEKLVTLGKRGDLHARRQAISAIRDVRLVAKLFDTLAARYATRNGGYIRIMKAGFRAGDNAPLAVVEFVERDVDAKGKADRARVEAEAAAEADAA.

The protein belongs to the bacterial ribosomal protein bL17 family. Part of the 50S ribosomal subunit. Contacts protein L32.

This is Large ribosomal subunit protein bL17 from Brucella abortus (strain S19).